The sequence spans 357 residues: 3-isopropylmalate dehydrogenase (357 aa).

75–88 (GPKWEHLPPAEQPE) provides a ligand contact to NAD(+). The substrate site is built by R96, R106, R135, and D224. Positions 224, 248, and 252 each coordinate Mg(2+). NAD(+) is bound at residue 282 to 294 (GSAPDIAGQGIAN).

This sequence belongs to the isocitrate and isopropylmalate dehydrogenases family. LeuB type 1 subfamily. Homodimer. The cofactor is Mg(2+). Mn(2+) is required as a cofactor.

It is found in the cytoplasm. The enzyme catalyses (2R,3S)-3-isopropylmalate + NAD(+) = 4-methyl-2-oxopentanoate + CO2 + NADH. The protein operates within amino-acid biosynthesis; L-leucine biosynthesis; L-leucine from 3-methyl-2-oxobutanoate: step 3/4. Functionally, catalyzes the oxidation of 3-carboxy-2-hydroxy-4-methylpentanoate (3-isopropylmalate) to 3-carboxy-4-methyl-2-oxopentanoate. The product decarboxylates to 4-methyl-2 oxopentanoate. The sequence is that of 3-isopropylmalate dehydrogenase from Desulfotalea psychrophila (strain LSv54 / DSM 12343).